The chain runs to 83 residues: Acid shock protein (83 aa).

A signal peptide spans 1-21 (MKKVLALVVAAAMGLSSAAFA). The segment covering 22 to 40 (AETATPAKTATPAKTTQNT) has biased composition (low complexity). The propeptide occupies 22–56 (AETATPAKTATPAKTTQNTQHHKKQHKKTVEQKAQ). Residues 22 to 83 (AETATPAKTA…TSKTTSQPAA (62 aa)) form a disordered region. Basic residues predominate over residues 57 to 70 (AAKKHQKKDGKKAP). The span at 71-83 (AKSTSKTTSQPAA) shows a compositional bias: low complexity.

It belongs to the Asr family. In terms of processing, proteolytic processing gives rise to the active protein.

The protein resides in the periplasm. Functionally, required for growth and/or survival at acidic conditions. This chain is Acid shock protein, found in Salmonella heidelberg (strain SL476).